Here is a 103-residue protein sequence, read N- to C-terminus: Small ribosomal subunit protein uS10 (103 aa).

It belongs to the universal ribosomal protein uS10 family. As to quaternary structure, part of the 30S ribosomal subunit.

Functionally, involved in the binding of tRNA to the ribosomes. In Baumannia cicadellinicola subsp. Homalodisca coagulata, this protein is Small ribosomal subunit protein uS10.